Reading from the N-terminus, the 87-residue chain is MEVIADRLDDIVKQNIADEKFVDFVIHGLEHQCPAILRPLIRLFIDILLFVIVIYIFTVRLVSRNYQMLLALLALVISLTIFYYFIL.

The next 2 membrane-spanning stretches (helical) occupy residues 39–59 and 67–87; these read PLIR…IFTV and QMLL…YFIL.

This sequence belongs to the orthopoxvirus OPG096 family. In terms of assembly, interacts with OPG158.

The protein resides in the virion membrane. The protein localises to the host cytoplasm. It localises to the host endoplasmic reticulum membrane. Its function is as follows. Early protein involved in virion morphogenesis. Participates in the formation and elongation of crescent-shaped membrane precursors of immature virions in cytoplasmic factories. In Homo sapiens (Human), this protein is Protein OPG096 (OPG096).